The primary structure comprises 144 residues: Mercuric transport protein MerC (144 aa).

Over 1–21 the chain is Cytoplasmic; sequence MSAITRIIDKIGIVGTIVGSF. A helical membrane pass occupies residues 22–42; sequence SCAMCFPAAASLGAAIGLGFL. Cysteine 23 and cysteine 26 together coordinate Hg(2+). Topologically, residues 43–46 are periplasmic; it reads SQWE. The helical transmembrane segment at 47–67 threads the bilayer; that stretch reads GLFVQWLIPIFASVALLATLA. Residues 68–78 lie on the Cytoplasmic side of the membrane; it reads GWFSHRQWQRT. The helical transmembrane segment at 79–99 threads the bilayer; the sequence is LLGSIGPVLALVGVFGLTHHF. At 100–103 the chain is on the periplasmic side; that stretch reads LDKD. A helical membrane pass occupies residues 104–124; it reads LARVIFYTGLVVMFLVSIWDM. Over 125-144 the chain is Cytoplasmic; sequence VNPANRRCATDGCETPAPRS.

As to quaternary structure, monomer.

It is found in the cell inner membrane. Its activity is regulated as follows. Inhibited by the thiol-modifying reagent N-ethylmaleimide (NEM). Its function is as follows. Involved in mercuric ion uptake. The protein is Mercuric transport protein MerC of Acidithiobacillus ferrooxidans (Thiobacillus ferrooxidans).